We begin with the raw amino-acid sequence, 414 residues long: Peptide chain release factor subunit 1 (414 aa).

The protein belongs to the eukaryotic release factor 1 family. Heterodimer of two subunits, one of which binds GTP.

It localises to the cytoplasm. In terms of biological role, directs the termination of nascent peptide synthesis (translation) in response to the termination codons UAA, UAG and UGA. This Methanococcoides burtonii (strain DSM 6242 / NBRC 107633 / OCM 468 / ACE-M) protein is Peptide chain release factor subunit 1.